The chain runs to 890 residues: Protein FAM171A1 (890 aa).

The signal sequence occupies residues 1 to 21; it reads MSRSAALLLCLLGCHVWKAVT. At 22–303 the chain is on the extracellular side; the sequence is KTLREPGAGA…VTQDITTYHT (282 aa). N-linked (GlcNAc...) asparagine glycosylation is found at Asn-190 and Asn-194. Residues 304-324 traverse the membrane as a helical segment; sequence VFLLAILGGMAFILLVLLCLL. Residues 325-890 are Cytoplasmic-facing; that stretch reads LYYCRRKCMK…ERPLMAFNIK (566 aa). Phosphoserine occurs at positions 358, 360, 371, 422, 443, and 525. Disordered regions lie at residues 730–759 and 818–890; these read AGRNGSNDASLDSGVDMNEPKSARKGRGDA and EGSS…FNIK. The span at 747-757 shows a compositional bias: basic and acidic residues; sequence NEPKSARKGRG. Residues 822–833 are compositionally biased toward polar residues; that stretch reads RRSGGQLPSLQE. Ser-849 and Ser-855 each carry phosphoserine. Positions 858-869 are enriched in acidic residues; that stretch reads EEEEDDDDDDQG. Positions 870-883 are enriched in basic and acidic residues; the sequence is EDKKSPWQKREERP.

It belongs to the FAM171 family. Interacts with ADAM10, NSG1 and OAZ1.

The protein resides in the cell membrane. Functionally, involved in the regulation of the cytoskeletal dynamics, plays a role in actin stress fiber formation. In Pongo abelii (Sumatran orangutan), this protein is Protein FAM171A1 (FAM171A1).